The chain runs to 129 residues: Large ribosomal subunit protein bL19 (129 aa).

It belongs to the bacterial ribosomal protein bL19 family.

In terms of biological role, this protein is located at the 30S-50S ribosomal subunit interface and may play a role in the structure and function of the aminoacyl-tRNA binding site. The polypeptide is Large ribosomal subunit protein bL19 (Burkholderia mallei (strain NCTC 10247)).